Reading from the N-terminus, the 389-residue chain is SH2 domain-containing protein 2A (389 aa).

The segment at 41-63 is disordered; that stretch reads AASPQAPEAASNTGNAERAEEVP. Residues 95–186 form the SH2 domain; sequence WFHGFITRRE…PYGETLTEPL (92 aa). The interval 190–295 is disordered; the sequence is TPEPAGLSLR…PIAFYAMGRG (106 aa). Positions 203-216 are enriched in polar residues; sequence SNFGSKSQDPNPQY. At Ser217 the chain carries Phosphoserine. Short sequence motifs (SH3-binding) lie at residues 244-250 and 272-278; these read RPKPPIP and RPKPSNP. The segment covering 245–256 has biased composition (pro residues); it reads PKPPIPAKPQLP. Ser296 bears the Phosphoserine mark. The disordered stretch occupies residues 324 to 389; the sequence is KSWSRPVPGG…QAWLPLGPPQ (66 aa). The span at 337-348 shows a compositional bias: polar residues; the sequence is GGSQLHSENSVI. Residues 352–361 are compositionally biased toward pro residues; sequence PPLPHQPPPA.

In terms of assembly, interacts with KDR. Interacts with TXK and ITK. Phosphorylated on tyrosine residues. Expression limited to tissues of the immune system and, in particular, activated T-cells. Expressed in peripheral blood leukocytes, thymus and spleen. Much lower expression or undetectable, in brain, placenta, skeletal muscle, prostate, testis, ovary, small intestine, and colon. Expressed at low levels in unstimulated T-cells, but not expressed in normal resting or activated B-cells. According to PubMed:10692392, expression is not restricted to activated T-cells, but strongly expressed in blood cell lineages, the endothelium and other cell and tissue types, such as heart, lung, and liver.

The protein localises to the cytoplasm. Functionally, could be a T-cell-specific adapter protein involved in the control of T-cell activation. May play a role in the CD4-p56-LCK-dependent signal transduction pathway. Could also play an important role in normal and pathological angiogenesis. Could be an adapter protein that facilitates and regulates interaction of KDR with effector proteins important to endothelial cell survival and proliferation. The sequence is that of SH2 domain-containing protein 2A (SH2D2A) from Homo sapiens (Human).